The primary structure comprises 237 residues: Ribose-5-phosphate isomerase A (237 aa).

Substrate is bound by residues 33 to 36 (TGST), 88 to 91 (DGAD), and 101 to 104 (KGRG). Catalysis depends on Glu110, which acts as the Proton acceptor. Residue Lys128 coordinates substrate.

It belongs to the ribose 5-phosphate isomerase family. As to quaternary structure, homodimer.

The enzyme catalyses aldehydo-D-ribose 5-phosphate = D-ribulose 5-phosphate. It participates in carbohydrate degradation; pentose phosphate pathway; D-ribose 5-phosphate from D-ribulose 5-phosphate (non-oxidative stage): step 1/1. Its function is as follows. Catalyzes the reversible conversion of ribose-5-phosphate to ribulose 5-phosphate. This Methanoregula boonei (strain DSM 21154 / JCM 14090 / 6A8) protein is Ribose-5-phosphate isomerase A.